A 133-amino-acid polypeptide reads, in one-letter code: Ribosome-binding factor A (133 aa).

This sequence belongs to the RbfA family. Monomer. Binds 30S ribosomal subunits, but not 50S ribosomal subunits or 70S ribosomes.

Its subcellular location is the cytoplasm. One of several proteins that assist in the late maturation steps of the functional core of the 30S ribosomal subunit. Associates with free 30S ribosomal subunits (but not with 30S subunits that are part of 70S ribosomes or polysomes). Required for efficient processing of 16S rRNA. May interact with the 5'-terminal helix region of 16S rRNA. This Pseudomonas fluorescens (strain ATCC BAA-477 / NRRL B-23932 / Pf-5) protein is Ribosome-binding factor A.